We begin with the raw amino-acid sequence, 435 residues long: D-amino acid dehydrogenase (435 aa).

3-17 (VLILGSGVIGTTSAW) lines the FAD pocket.

Belongs to the DadA oxidoreductase family. FAD serves as cofactor.

The enzyme catalyses a D-alpha-amino acid + A + H2O = a 2-oxocarboxylate + AH2 + NH4(+). The protein operates within amino-acid degradation; D-alanine degradation; NH(3) and pyruvate from D-alanine: step 1/1. Functionally, oxidative deamination of D-amino acids. The polypeptide is D-amino acid dehydrogenase (Xylella fastidiosa (strain M12)).